The chain runs to 391 residues: Saxitoxin and tetrodotoxin-binding protein 1 (391 aa).

An N-terminal signal peptide occupies residues 1 to 20 (MGAVPGVVLLLMLAVLGIRA). 2 consecutive repeat copies span residues 24 to 202 (PEEC…HKKS) and 203 to 391 (PEEC…PEQD). Asn54, Asn63, Asn97, Asn234, Asn268, Asn277, and Asn307 each carry an N-linked (GlcNAc...) asparagine glycan.

As to quaternary structure, homodimer or heterodimer of PSTBP1 and PSTBP2. Post-translationally, glycosylated.

It localises to the secreted. Its function is as follows. Binds both saxitoxin and tetradotoxin. May play a role in toxin accumulation and/or excretion. This chain is Saxitoxin and tetrodotoxin-binding protein 1 (psbp1), found in Takifugu pardalis (Panther puffer).